The following is a 225-amino-acid chain: Interleukin-6 (225 aa).

A signal peptide spans 1 to 24 (MPSRLNVFWLCAAALAALLRCAPA). N-linked (GlcNAc...) asparagine glycosylation is present at asparagine 98.

The protein belongs to the IL-6 superfamily. As to quaternary structure, component of a hexamer of two molecules each of IL6, IL6R and IL6ST; first binds to IL6R to associate with the signaling subunit IL6ST. Expressed in white muscle, skin, spleen, anterior intestine and stomach. Not expressed in brain, gill, head kidney, posterior intestine and adipose tissue.

The protein localises to the secreted. Cytokine with a wide variety of biological functions in immunity, tissue regeneration, and metabolism. Binds to IL6R, then the complex associates to the signaling subunit IL6ST/gp130 to trigger the intracellular IL6-signaling pathway. The interaction with the membrane-bound IL6R and IL6ST stimulates 'classic signaling', whereas the binding of IL6 and soluble IL6R to IL6ST stimulates 'trans-signaling'. Alternatively, 'cluster signaling' occurs when membrane-bound IL6:IL6R complexes on transmitter cells activate IL6ST receptors on neighboring receiver cells. This is Interleukin-6 (il6) from Sparus aurata (Gilthead sea bream).